The chain runs to 626 residues: tRNA uridine 5-carboxymethylaminomethyl modification enzyme MnmG (626 aa).

13–18 (GGGHAG) lines the FAD pocket. 273–287 (GPRYCPSIEDKIHRF) contributes to the NAD(+) binding site.

Belongs to the MnmG family. In terms of assembly, homodimer. Heterotetramer of two MnmE and two MnmG subunits. FAD serves as cofactor.

It is found in the cytoplasm. Its function is as follows. NAD-binding protein involved in the addition of a carboxymethylaminomethyl (cmnm) group at the wobble position (U34) of certain tRNAs, forming tRNA-cmnm(5)s(2)U34. The chain is tRNA uridine 5-carboxymethylaminomethyl modification enzyme MnmG from Acinetobacter baumannii (strain ACICU).